The primary structure comprises 171 residues: MEDLKLTIRDIPDFPKKGIIFKDITTLLQDAKSFTRMIDMIANRYIGQRIDKVVGVEARGFLIGAALAYRLGAGVVLVRKPGKLPSETFSKTYDLEYGTDTLEIHKDAIKPGEKILIADDLLATGGTMAAVVDMVTNMQGEIVECCFMTELTFLDGRKKLPEGKVYSLMQF.

This sequence belongs to the purine/pyrimidine phosphoribosyltransferase family. As to quaternary structure, homodimer.

It is found in the cytoplasm. It catalyses the reaction AMP + diphosphate = 5-phospho-alpha-D-ribose 1-diphosphate + adenine. Its pathway is purine metabolism; AMP biosynthesis via salvage pathway; AMP from adenine: step 1/1. Functionally, catalyzes a salvage reaction resulting in the formation of AMP, that is energically less costly than de novo synthesis. The protein is Adenine phosphoribosyltransferase of Trichlorobacter lovleyi (strain ATCC BAA-1151 / DSM 17278 / SZ) (Geobacter lovleyi).